We begin with the raw amino-acid sequence, 324 residues long: Acetyl-coenzyme A carboxylase carboxyl transferase subunit alpha (324 aa).

Residues 42-296 (RLSELEEEVY…EKALTRLAEK (255 aa)) form the CoA carboxyltransferase C-terminal domain.

It belongs to the AccA family. Acetyl-CoA carboxylase is a heterohexamer composed of biotin carboxyl carrier protein (AccB), biotin carboxylase (AccC) and two subunits each of ACCase subunit alpha (AccA) and ACCase subunit beta (AccD).

The protein resides in the cytoplasm. The catalysed reaction is N(6)-carboxybiotinyl-L-lysyl-[protein] + acetyl-CoA = N(6)-biotinyl-L-lysyl-[protein] + malonyl-CoA. The protein operates within lipid metabolism; malonyl-CoA biosynthesis; malonyl-CoA from acetyl-CoA: step 1/1. Its function is as follows. Component of the acetyl coenzyme A carboxylase (ACC) complex. First, biotin carboxylase catalyzes the carboxylation of biotin on its carrier protein (BCCP) and then the CO(2) group is transferred by the carboxyltransferase to acetyl-CoA to form malonyl-CoA. The polypeptide is Acetyl-coenzyme A carboxylase carboxyl transferase subunit alpha (Shouchella clausii (strain KSM-K16) (Alkalihalobacillus clausii)).